The sequence spans 564 residues: Aspyridones efflux protein (564 aa).

Residues Met1–Thr17 show a composition bias toward low complexity. The segment at Met1–Thr49 is disordered. Basic and acidic residues predominate over residues Cys19–Glu47. 10 helical membrane passes run Ala66–Pro86, Trp127–Pro147, Ile158–Val178, Leu185–Gly205, Trp216–Phe236, Val260–Gly280, Ser287–Val307, Phe335–Val355, Leu368–Ile388, and Ala392–Phe412. N-linked (GlcNAc...) asparagine glycosylation is present at Asn415. 2 helical membrane-spanning segments follow: residues Val416–Trp436 and Ile454–Ala474. A glycan (N-linked (GlcNAc...) asparagine) is linked at Asn524. The chain crosses the membrane as a helical span at residues Leu528–Val548.

This sequence belongs to the major facilitator superfamily. TCR/Tet family.

Its subcellular location is the cell membrane. Its function is as follows. Efflux pump that may be involved in the secretion of leporins. The polypeptide is Aspyridones efflux protein (TP) (Neocamarosporium betae (Beet black rot fungus)).